The primary structure comprises 331 residues: ESX-3 secretion system protein EccE3 (331 aa).

2 helical membrane-spanning segments follow: residues 11-31 (GRVT…PWQS) and 37-57 (LLGV…GLYF).

This sequence belongs to the EccE family. As to quaternary structure, part of the ESX-3 / type VII secretion system (T7SS), which is composed of cytosolic and membrane components. The ESX-3 membrane complex is composed of EccB3, EccC3, EccD3 and EccE3.

It localises to the cell inner membrane. Functionally, part of the ESX-3 specialized secretion system, which is important for iron and zinc uptake or homeostasis. In Mycobacterium tuberculosis (strain CDC 1551 / Oshkosh), this protein is ESX-3 secretion system protein EccE3.